The primary structure comprises 433 residues: ATP-dependent protease ATPase subunit HslU (433 aa).

ATP-binding positions include isoleucine 18, 60–65 (GVGKTE), aspartate 246, glutamate 311, and arginine 383.

It belongs to the ClpX chaperone family. HslU subfamily. In terms of assembly, a double ring-shaped homohexamer of HslV is capped on each side by a ring-shaped HslU homohexamer. The assembly of the HslU/HslV complex is dependent on binding of ATP.

The protein localises to the cytoplasm. Functionally, ATPase subunit of a proteasome-like degradation complex; this subunit has chaperone activity. The binding of ATP and its subsequent hydrolysis by HslU are essential for unfolding of protein substrates subsequently hydrolyzed by HslV. HslU recognizes the N-terminal part of its protein substrates and unfolds these before they are guided to HslV for hydrolysis. The polypeptide is ATP-dependent protease ATPase subunit HslU (Cereibacter sphaeroides (strain ATCC 17029 / ATH 2.4.9) (Rhodobacter sphaeroides)).